Consider the following 487-residue polypeptide: GTPase Der (487 aa).

2 consecutive EngA-type G domains span residues 3–166 (PVIA…PRDA) and 193–366 (IKIA…QSAV). Residues 9–16 (GRPNVGKS), 56–60 (DTGGI), 118–121 (NKID), 199–206 (GRPNVGKS), 246–250 (DTAGV), and 311–314 (NKWD) each bind GTP. The KH-like domain occupies 367–451 (TRWPTSRLTQ…PIRIEYKGGE (85 aa)). Basic and acidic residues predominate over residues 448–461 (KGGENPYEGKKNTL). The segment at 448-487 (KGGENPYEGKKNTLTDRQVNKKRRLMSHHKKAEKKRRDKR) is disordered. Residues 467–487 (NKKRRLMSHHKKAEKKRRDKR) show a composition bias toward basic residues.

It belongs to the TRAFAC class TrmE-Era-EngA-EngB-Septin-like GTPase superfamily. EngA (Der) GTPase family. Associates with the 50S ribosomal subunit.

In terms of biological role, GTPase that plays an essential role in the late steps of ribosome biogenesis. The protein is GTPase Der of Pseudomonas putida (strain ATCC 700007 / DSM 6899 / JCM 31910 / BCRC 17059 / LMG 24140 / F1).